Consider the following 657-residue polypeptide: MGGLCSRSSSVNNAPGGTFAHVNGHHLNNNASDLNSHSGESGLKDDPSPVTENVDDNKHTSESFSFPIVSSGSHPQNIEDGIPRLSRVLSQKSRSTKSRQAAVAKVSEVSSLLGRAGTMGLGKAVDVLDTLGSSMTNLNLSGGFSSATTVKGNKISILSFEVANTIVKGANLMHSLSKDSITHLKEVVLPSEGVQNLISKDMDELLRIAAADKREELRIFSGEVVRFGNRCKDPQYHNLDRFFDRLGSEFTPQKHLKQEAETIMHQMMSFVHFTADLYHELHALDRFEQDYQRKIQEEENPSTAQRGVGDTLAILRTELKSQKKHVRNLKKKSLWSRILEEVMEKLVDVVHFLHLEIHEAFGGADPDKPANDPPINHKKLGSAGLALHYANIITQIDTLVSRSSTMPASTRDALYQGLPPSIKSALRSRIQSFQVKEELTVPQIKAEMEKTLQWLVPVATNTTKAHHGFGWVGEWASSGSEANQRPAGQTILRIDTLHHADKEKTEAYILDLVVWLHHLVTQVRATTGYGLRSPVKSPIRSPNQKTIQLSSGSHNPSMGLPLLTTEDQEMLRDVSKRRKTPGISKSQEFETVAKARLCKHHRLSKSSSHSPMMGEMMKNKKDTFSTRRPSSVPIIDFDIDRMKALDVIDRVDTIRSL.

4 stretches are compositionally biased toward polar residues: residues 1-15 (MGGL…NNAP), 26-39 (HLNN…SHSG), 62-76 (ESFS…SHPQ), and 540-556 (RSPN…SHNP). Disordered stretches follow at residues 1–80 (MGGL…NIED) and 534–559 (PVKS…PSMG). A lipid anchor (N-myristoyl glycine) is attached at G2.

It is found in the nucleus. Its function is as follows. Promotes seedling growth probably via the regulation of phytosulfokine (PSK) signaling; PSK are peptide phytohormones acting as growth factors. Together with PSI2 and PSI3, required during vegetative growth and reproduction. May also have a function in carbohydrate metabolism. The sequence is that of Protein PSK SIMULATOR 1 from Arabidopsis thaliana (Mouse-ear cress).